Consider the following 283-residue polypeptide: Non-selective voltage-gated ion channel VDAC3 (283 aa).

Position 2 is an N-acetylcysteine (C2). Phosphothreonine is present on T4. Residues K12, K15, and K20 each carry the N6-acetyllysine modification. The next 2 beta stranded transmembrane spans lie at 26-35 and 39-47; these read MVKIDLRTKS and VEFSTSGHA. Residue K53 forms a Glycyl lysine isopeptide (Lys-Gly) (interchain with G-Cter in ubiquitin) linkage. The next 3 beta stranded transmembrane spans lie at 54–64, 69–76, and 80–89; these read ASGNLETKYKV, LTFTQKWN, and TLGTEISLEN. K90 is modified (N6-acetyllysine). A beta stranded transmembrane segment spans residues 95–104; it reads LKLTLDTIFV. Residues K109 and K110 each participate in a glycyl lysine isopeptide (Lys-Gly) (interchain with G-Cter in ubiquitin) cross-link. 10 consecutive transmembrane segments (beta stranded) span residues 111–120, 123–130, 137–145, 150–158, 163–175, 178–185, 189–198, 202–211, 218–227, and 231–238; these read SGKLKASYKR, FSLGSNVD, TIYGWAVLA, LAGYQMSFD, KLSQ…GYKA, FQLHTHVN, EFGGSIYQKV, IETSINLAWT, RFGIAAKYKL, and TSLSAKVN. The residue at position 241 (S241) is a Phosphoserine. NAD(+) contacts are provided by residues 242–244 and 260–264; these read LIG and SALID. 2 consecutive transmembrane segments (beta stranded) span residues 242–251 and 254–263; these read LIGLGYTQTL and GVKLTLSALI. K266 is subject to N6-acetyllysine; alternate. K266 is covalently cross-linked (Glycyl lysine isopeptide (Lys-Gly) (interchain with G-Cter in ubiquitin); alternate). The chain crosses the membrane as a beta stranded span at residues 273 to 282; the sequence is HKVGLGFELE.

The protein belongs to the eukaryotic mitochondrial porin family. In terms of assembly, interacts with ARMC12 in a TBC1D21-dependent manner. Interacts with MISFA. Ubiquitinated by PRKN during mitophagy, leading to its degradation and enhancement of mitophagy. Deubiquitinated by USP30.

The protein localises to the mitochondrion outer membrane. Its subcellular location is the membrane. The enzyme catalyses chloride(in) = chloride(out). The catalysed reaction is K(+)(in) = K(+)(out). Its function is as follows. Non-selective voltage-gated ion channel that mediates the transport of anions and cations through the mitochondrion outer membrane and plasma membrane. Forms a high-conducting channel with a stable open state and a voltage-induced closure with a mild preference for anions over cations. Involved in male fertility and sperm mitochondrial sheath formation. In Oryctolagus cuniculus (Rabbit), this protein is Non-selective voltage-gated ion channel VDAC3.